A 521-amino-acid polypeptide reads, in one-letter code: Beta-glucosidase 6 (521 aa).

The N-terminal stretch at 1–38 is a signal peptide; it reads MGRIKSSSGRCSTARLEAVAVLVVVFGVASSSLRGCIA. A beta-D-glucoside contacts are provided by residues Gln-64, His-165, and 210 to 211; that span reads NE. The active-site Proton donor is Glu-211. A disulfide bridge connects residues Cys-230 and Cys-238. Asn-291 carries N-linked (GlcNAc...) asparagine glycosylation. A beta-D-glucoside is bound at residue Tyr-354. N-linked (GlcNAc...) asparagine glycans are attached at residues Asn-362 and Asn-372. A beta-D-glucoside contacts are provided by residues Glu-427, Trp-477, 484–485, and Phe-493; that span reads EW. Glu-427 (nucleophile) is an active-site residue.

Belongs to the glycosyl hydrolase 1 family. Homodimer.

The protein localises to the secreted. It carries out the reaction Hydrolysis of terminal, non-reducing beta-D-glucosyl residues with release of beta-D-glucose.. Its function is as follows. Hydrolyzes glycosides, oligosaccharides and hydrophobic glycosides. Possesses gibberellin ester beta-D-glucosidase activity. Can hydrolyze gibberellin A4 beta-D-glucosyl ester in vitro. The polypeptide is Beta-glucosidase 6 (Oryza sativa subsp. japonica (Rice)).